Reading from the N-terminus, the 5005-residue chain is Bridge-like lipid transfer protein family member 1 (5005 aa).

The helical transmembrane segment at 27 to 47 (VVWLLVATILSCGWIIYLTYY) threads the bilayer. Disordered regions lie at residues 692 to 718 (RPAQ…PSEL) and 1205 to 1314 (KSVG…ASVC). Residues 708-718 (SPRPPVDPSEL) are compositionally biased toward pro residues. Residues 1205–1215 (KSVGIEGERKT) are compositionally biased toward basic and acidic residues. Over residues 1226–1240 (SHSSSSSSEENSSSS) the composition is skewed to low complexity. Positions 1248–1275 (GEKESPSSAADDHSVQKDLLHSARRDDG) are enriched in basic and acidic residues. Polar residues predominate over residues 1278 to 1303 (SVPTEISGTSPVSPNTQDKSVGQSPL). A phosphoserine mark is found at S1301, S1305, and S1323. T1325 is subject to Phosphothreonine. Disordered stretches follow at residues 1343 to 1376 (SDVS…SNSF), 1399 to 1425 (EEFE…QMQQ), 1521 to 1544 (TNKR…SEES), and 1676 to 1698 (FSEN…MIGT). 2 positions are modified to phosphoserine: S1355 and S1406. A compositionally biased stretch (basic residues) spans 1521 to 1530 (TNKRTSKSSL). Residues 1684 to 1693 (QDIRGTKTEH) show a composition bias toward basic and acidic residues. A phosphoserine mark is found at S1805 and S1808. 6 disordered regions span residues 1927 to 1991 (RGGV…PLMP), 2165 to 2192 (PAQP…GGLQ), 2265 to 2288 (TSGD…KESP), 2367 to 2387 (ESPV…PNLP), 2400 to 2420 (SSDQ…QDDV), and 2598 to 2677 (TAGS…KDVV). Composition is skewed to polar residues over residues 1931–1948 (LTSN…YNTD) and 1959–1971 (TSPS…NSVS). 3 stretches are compositionally biased toward polar residues: residues 2367-2379 (ESPV…NSLP), 2400-2418 (SSDQ…TSQD), and 2598-2608 (TAGSASPTPTF). Phosphoserine occurs at positions 2601 and 2603. The span at 2619–2638 (SDFSRSSRGSLNGGNRVNNA) shows a compositional bias: low complexity. The span at 2643–2665 (ANNENNKKESRNKNSLGRSERRT) shows a compositional bias: basic and acidic residues. S2755 bears the Phosphoserine mark. The interval 2928–2967 (RQPSTAPQPMKEDIATPLPSEKTPTSVNQTPIETNEFPQL) is disordered. Residues 2949–2964 (KTPTSVNQTPIETNEF) show a composition bias toward polar residues. Phosphoserine is present on residues S3562, E3577, and S3653. 6 disordered regions span residues 3614–3662 (YSRS…TFNI), 3686–3744 (SSNS…ERFY), 3821–3843 (RRSY…KKFQ), 3935–3954 (KTNT…KGKG), 4089–4145 (TTYP…SSSS), and 4325–4396 (QSAS…ASQQ). Positions 3686-3711 (SSNSEGSCSVFSSPKTTGGFSPSVPF) are enriched in polar residues. A compositionally biased stretch (acidic residues) spans 3727–3736 (EDSEKDEKDE). The span at 3821–3837 (RRSYDRSSRSLDQDSPS) shows a compositional bias: basic and acidic residues. Over residues 4097 to 4112 (SPGSNAPQTGAKTSAS) the composition is skewed to polar residues. Residues 4117–4145 (PGSSGLGSPLGRSRHSSSQSDLTGSSSSS) show a composition bias toward low complexity. Position 4124 is a phosphoserine (S4124). Over residues 4325 to 4358 (QSASFTHMPQSPNVFNEHMTNNTMSPGTAAQSLK) the composition is skewed to polar residues. The segment covering 4359 to 4372 (SPASIRSRSVSDSS) has biased composition (low complexity). Residues 4381 to 4396 (KTSTPVNKSNKAASQQ) are compositionally biased toward polar residues.

In terms of tissue distribution, highly expressed in testis and ovary. Weakly or not expressed in other tissues.

Its subcellular location is the cell membrane. The protein localises to the endoplasmic reticulum membrane. The protein resides in the mitochondrion membrane. Functionally, tube-forming lipid transport protein which provides phosphatidylethanolamine for glycosylphosphatidylinositol (GPI) anchor synthesis in the endoplasmic reticulum. Plays a role in endosomal trafficking and endosome recycling. Also involved in the actin cytoskeleton and cilia structural dynamics. Acts as a regulator of phagocytosis. The protein is Bridge-like lipid transfer protein family member 1 (Bltp1) of Mus musculus (Mouse).